The primary structure comprises 180 residues: Cytidylate kinase 2 (180 aa).

ATP is bound at residue 7–15 (GKSGCGNTT).

This sequence belongs to the cytidylate kinase family. Type 2 subfamily.

The protein resides in the cytoplasm. The enzyme catalyses CMP + ATP = CDP + ADP. The catalysed reaction is dCMP + ATP = dCDP + ADP. This Borreliella burgdorferi (strain ATCC 35210 / DSM 4680 / CIP 102532 / B31) (Borrelia burgdorferi) protein is Cytidylate kinase 2 (cmk2).